The primary structure comprises 95 residues: MQIDDTLLNKLEKLSALQINDEKREEIKKQLSEIVSFVDVLNELDLSSDEAVVSSIKGGTPLREDEPHLSNVVDEILKHAPSREGHFFAVPKIIE.

Belongs to the GatC family. Heterotrimer of A, B and C subunits.

The catalysed reaction is L-glutamyl-tRNA(Gln) + L-glutamine + ATP + H2O = L-glutaminyl-tRNA(Gln) + L-glutamate + ADP + phosphate + H(+). It carries out the reaction L-aspartyl-tRNA(Asn) + L-glutamine + ATP + H2O = L-asparaginyl-tRNA(Asn) + L-glutamate + ADP + phosphate + 2 H(+). In terms of biological role, allows the formation of correctly charged Asn-tRNA(Asn) or Gln-tRNA(Gln) through the transamidation of misacylated Asp-tRNA(Asn) or Glu-tRNA(Gln) in organisms which lack either or both of asparaginyl-tRNA or glutaminyl-tRNA synthetases. The reaction takes place in the presence of glutamine and ATP through an activated phospho-Asp-tRNA(Asn) or phospho-Glu-tRNA(Gln). This chain is Aspartyl/glutamyl-tRNA(Asn/Gln) amidotransferase subunit C, found in Campylobacter concisus (strain 13826).